The chain runs to 352 residues: Ion-translocating oxidoreductase complex subunit D (352 aa).

5 helical membrane passes run 20 to 40, 42 to 62, 78 to 109, 123 to 143, and 148 to 168; these read IMLL…WFFG, GTLV…ALVL, ALLT…VIIA, PAMI…TSWL, and IAVN…GHTA. T187 is modified (FMN phosphoryl threonine). 5 helical membrane passes run 214-234, 242-262, 267-287, 301-321, and 322-342; these read ILAG…GVWL, WHIP…GWLF, LAAP…FFIL, LIFG…GGYP, and DGVA…DYYT.

Belongs to the NqrB/RnfD family. In terms of assembly, the complex is composed of six subunits: RsxA, RsxB, RsxC, RsxD, RsxE and RsxG. Requires FMN as cofactor.

The protein localises to the cell inner membrane. Its function is as follows. Part of a membrane-bound complex that couples electron transfer with translocation of ions across the membrane. Required to maintain the reduced state of SoxR. The chain is Ion-translocating oxidoreductase complex subunit D from Escherichia coli O6:K15:H31 (strain 536 / UPEC).